The sequence spans 69 residues: MKLQLCLVLLLLGVLYVQSVPEKRNKPECNSYRGQCTYMGHPCPDHTFPCETYFDCPAGPHERCCCYKD.

The signal sequence occupies residues 1–19 (MKLQLCLVLLLLGVLYVQS). Positions 20–22 (VPE) are excised as a propeptide.

The protein belongs to the Cnidaria small cysteine-rich protein (SCRiP) family. delta subfamily. Post-translationally, contains 4 disulfide bonds.

It localises to the secreted. The protein resides in the nematocyst. In terms of biological role, induces neurotoxic symptoms on zebrafish. Has also been claimed to be implied in calcification, but this function seems improbable. This is Small cysteine-rich protein from Metridium senile (Brown sea anemone).